The following is a 119-amino-acid chain: Gibberellin-regulated protein 9 (119 aa).

Residues 1–24 (MKKMNVVAFVTLIISFLLLSQVLA) form the signal peptide.

The protein belongs to the GASA family. Post-translationally, six disulfide bonds may be present.

It localises to the secreted. Gibberellin-regulated protein that may function in hormonal controlled steps of development such as seed germination, flowering and seed maturation. The polypeptide is Gibberellin-regulated protein 9 (GASA9) (Arabidopsis thaliana (Mouse-ear cress)).